Consider the following 245-residue polypeptide: 1-(5-phosphoribosyl)-5-[(5-phosphoribosylamino)methylideneamino] imidazole-4-carboxamide isomerase (245 aa).

Asp7 acts as the Proton acceptor in catalysis. Asp129 (proton donor) is an active-site residue.

This sequence belongs to the HisA/HisF family.

Its subcellular location is the cytoplasm. The catalysed reaction is 1-(5-phospho-beta-D-ribosyl)-5-[(5-phospho-beta-D-ribosylamino)methylideneamino]imidazole-4-carboxamide = 5-[(5-phospho-1-deoxy-D-ribulos-1-ylimino)methylamino]-1-(5-phospho-beta-D-ribosyl)imidazole-4-carboxamide. Its pathway is amino-acid biosynthesis; L-histidine biosynthesis; L-histidine from 5-phospho-alpha-D-ribose 1-diphosphate: step 4/9. The protein is 1-(5-phosphoribosyl)-5-[(5-phosphoribosylamino)methylideneamino] imidazole-4-carboxamide isomerase of Escherichia coli (strain ATCC 8739 / DSM 1576 / NBRC 3972 / NCIMB 8545 / WDCM 00012 / Crooks).